The sequence spans 130 residues: Small ribosomal subunit protein uS9 (130 aa).

This sequence belongs to the universal ribosomal protein uS9 family.

This Cupriavidus necator (strain ATCC 17699 / DSM 428 / KCTC 22496 / NCIMB 10442 / H16 / Stanier 337) (Ralstonia eutropha) protein is Small ribosomal subunit protein uS9.